A 451-amino-acid chain; its full sequence is tRNA modification GTPase MnmE (451 aa).

Arg25, Glu87, and Arg127 together coordinate (6S)-5-formyl-5,6,7,8-tetrahydrofolate. The 153-residue stretch at 222 to 374 (GLRVALVGRP…FVQVLLERCG (153 aa)) folds into the TrmE-type G domain. Asn232 contacts K(+). GTP-binding positions include 232-237 (NVGKSS), 251-257 (TELPGTT), and 276-279 (DTAG). Ser236 provides a ligand contact to Mg(2+). K(+) is bound by residues Thr251, Leu253, and Thr256. Thr257 is a binding site for Mg(2+). (6S)-5-formyl-5,6,7,8-tetrahydrofolate is bound at residue Lys451.

The protein belongs to the TRAFAC class TrmE-Era-EngA-EngB-Septin-like GTPase superfamily. TrmE GTPase family. As to quaternary structure, homodimer. Heterotetramer of two MnmE and two MnmG subunits. K(+) serves as cofactor.

It is found in the cytoplasm. Functionally, exhibits a very high intrinsic GTPase hydrolysis rate. Involved in the addition of a carboxymethylaminomethyl (cmnm) group at the wobble position (U34) of certain tRNAs, forming tRNA-cmnm(5)s(2)U34. This is tRNA modification GTPase MnmE from Synechococcus sp. (strain CC9902).